Consider the following 1377-residue polypeptide: Hemoglobin-binding protease hbp autotransporter (1377 aa).

A signal peptide spans 1-52; the sequence is MNRIYSLRYSAVARGFIAVSEFARKCVHKSVRRLCFPVLLLIPVLFSAGSLA. The 250-residue stretch at 53–302 folds into the Peptidase S6 domain; that stretch reads GTVNNELGYQ…AVIPLDFIGQ (250 aa). Residues histidine 125, aspartate 153, and serine 259 each act as charge relay system in the active site. In terms of domain architecture, Autotransporter spans 1111-1377; sequence DINGEAGTWV…AINANIRYSF (267 aa).

Cleaved to release the mature protein from the outer membrane.

Its subcellular location is the periplasm. It is found in the secreted. The protein resides in the cell surface. The protein localises to the cell outer membrane. With respect to regulation, protease activity is inhibited by 3,4-dichloroisocoumarin. In terms of biological role, interacts with hemoglobin, degrades it and subsequently binds the released heme. Could make heme accessible not only for E.coli, but also for B.fragilis during mixed intra-abdominal infections. Has a role in abscess formation. This is Hemoglobin-binding protease hbp autotransporter (hbp) from Escherichia coli.